We begin with the raw amino-acid sequence, 447 residues long: Tektin-4 (447 aa).

2 coiled-coil regions span residues Leu322–Ala348 and Phe375–Leu423.

This sequence belongs to the tektin family. Microtubule inner protein component of sperm flagellar doublet microtubules. Post-translationally, ubiquitinated, leading to its degradation. Deubiquitinated by USP16, promoting its stability. In terms of tissue distribution, detected in testis, where it is weakly expressed in round spermatids, and strongly expressed in the flagellum of step 16 elongated spermatids (at protein level). Expressed in spermatozoa. In the sperm flagellum, localizes to the principal piece and midpiece (at protein level). Specifically expressed in testis; not detected in other tissues tested.

The protein localises to the cytoplasm. The protein resides in the cytoskeleton. It is found in the cilium axoneme. It localises to the flagellum axoneme. Functionally, microtubule inner protein (MIP) part of the dynein-decorated doublet microtubules (DMTs) in cilia and flagellar axoneme. Forms filamentous polymers in the walls of ciliary and flagellar microtubules. Contributes to normal sperm motility. The sequence is that of Tektin-4 (Tekt4) from Mus musculus (Mouse).